The chain runs to 178 residues: Caveolin-1 (178 aa).

An N-acetylserine modification is found at Ser2. Ser2 is subject to Phosphoserine. Residues 2 to 94 (SGGKYIDSEG…WKASFTTFTV (93 aa)) form a required for homooligomerization region. Topologically, residues 2 to 104 (SGGKYIDSEG…TKYWFYRLLS (103 aa)) are cytoplasmic. Lys5 is subject to N6-acetyllysine; alternate. Residue Lys5 forms a Glycyl lysine isopeptide (Lys-Gly) (interchain with G-Cter in ubiquitin); alternate linkage. Tyr6 bears the Phosphotyrosine mark. Ser9 carries the post-translational modification Phosphoserine. Residue Tyr14 is modified to Phosphotyrosine; by ABL1. The residue at position 25 (Tyr25) is a Phosphotyrosine. Residues Lys26, Lys30, Lys39, Lys47, and Lys57 each participate in a glycyl lysine isopeptide (Lys-Gly) (interchain with G-Cter in ubiquitin) cross-link. The tract at residues 82–94 (DGIWKASFTTFTV) is interaction with CAVIN3. Positions 105–125 (ALFGIPMALIWGIYFAILSFL) form an intramembrane region, helical. Over 126–178 (HIWAVVPCIRSYLIEIQCISRIYSICIHTFCDPLFEAIGKIFSNVRIALQKEI) the chain is Cytoplasmic. The segment at 131 to 142 (VPCIRSYLIEIQ) is interacts with SPRY1, SPRY2, SPRY3 and SPRY4. Residues Cys133, Cys143, and Cys156 are each lipidated (S-palmitoyl cysteine). An interacts with SPRY1, SPRY2, and SPRY4 region spans residues 149–160 (SICIHTFCDPLF). The interacts with SPRY1, SPRY2, SPRY3 and SPRY4 stretch occupies residues 167–178 (FSNVRIALQKEI).

Belongs to the caveolin family. In terms of assembly, homooligomer. Interacts with GLIPR2. Interacts with NOSTRIN. Interacts with SNAP25 and STX1A. Interacts (via the N-terminus) with DPP4; the interaction is direct. Interacts with CTNNB1, CDH1 and JUP. Interacts with PACSIN2; this interaction induces membrane tubulation. Interacts with SLC7A9. Interacts with BMX and BTK. Interacts with TGFBR1. Interacts with CAVIN3 (via leucine-zipper domain) in a cholesterol-sensitive manner. Interacts with CAVIN1. Interacts with EHD2 in a cholesterol-dependent manner. Forms a ternary complex with UBXN6 and VCP; mediates CAV1 targeting to lysosomes for degradation. Interacts with ABCG1; this interaction regulates ABCG1-mediated cholesterol efflux. Interacts with NEU3; this interaction enhances NEU3 sialidase activity within caveola. Interacts (via C-terminus) with SPRY1, SPRY2 (via C-terminus), SPRY3, and SPRY4. Interacts with IGFBP5; this interaction allows trafficking of IGFBP5 from the plasma membrane to the nucleus. Phosphorylated at Tyr-14 by ABL1 in response to oxidative stress. Post-translationally, ubiquitinated. Undergo monoubiquitination and multi- and/or polyubiquitination. Monoubiquitination of N-terminal lysines promotes integration in a ternary complex with UBXN6 and VCP which promotes oligomeric CAV1 targeting to lysosomes for degradation. Ubiquitinated by ZNRF1; leading to degradation and modulation of the TLR4-mediated immune response.

The protein localises to the golgi apparatus membrane. It localises to the cell membrane. It is found in the membrane. The protein resides in the caveola. Its subcellular location is the membrane raft. Functionally, may act as a scaffolding protein within caveolar membranes. Forms a stable heterooligomeric complex with CAV2 that targets to lipid rafts and drives caveolae formation. Mediates the recruitment of CAVIN proteins (CAVIN1/2/3/4) to the caveolae. Interacts directly with G-protein alpha subunits and can functionally regulate their activity. Involved in the costimulatory signal essential for T-cell receptor (TCR)-mediated T-cell activation. Its binding to DPP4 induces T-cell proliferation and NF-kappa-B activation in a T-cell receptor/CD3-dependent manner. Recruits CTNNB1 to caveolar membranes and may regulate CTNNB1-mediated signaling through the Wnt pathway. Negatively regulates TGFB1-mediated activation of SMAD2/3 by mediating the internalization of TGFBR1 from membrane rafts leading to its subsequent degradation. Binds 20(S)-hydroxycholesterol (20(S)-OHC). The polypeptide is Caveolin-1 (CAV1) (Didelphis virginiana (North American opossum)).